A 399-amino-acid chain; its full sequence is Enolase (399 aa).

Position 152 (Q152) interacts with (2R)-2-phosphoglycerate. The Proton donor role is filled by E194. Residues D230, E273, and D301 each coordinate Mg(2+). 4 residues coordinate (2R)-2-phosphoglycerate: K326, R355, S356, and K377. Catalysis depends on K326, which acts as the Proton acceptor.

It belongs to the enolase family. Mg(2+) is required as a cofactor.

It localises to the cytoplasm. Its subcellular location is the secreted. The protein localises to the cell surface. The catalysed reaction is (2R)-2-phosphoglycerate = phosphoenolpyruvate + H2O. It functions in the pathway carbohydrate degradation; glycolysis; pyruvate from D-glyceraldehyde 3-phosphate: step 4/5. Catalyzes the reversible conversion of 2-phosphoglycerate (2-PG) into phosphoenolpyruvate (PEP). It is essential for the degradation of carbohydrates via glycolysis. The polypeptide is Enolase (Methanocorpusculum labreanum (strain ATCC 43576 / DSM 4855 / Z)).